A 306-amino-acid polypeptide reads, in one-letter code: LysM and putative peptidoglycan-binding domain-containing protein 3 (306 aa).

The Extracellular portion of the chain corresponds to 1 to 217 (MAGRHQNRSF…PYYGADWGIG (217 aa)). Residue Asn7 is glycosylated (N-linked (GlcNAc...) asparagine). Ser55 bears the Phosphoserine mark. Positions 65 to 109 (LTKDIQEGDTLNAIALQYCCTVADIKRVNNLISDQDFFALRSIKI) constitute a LysM domain. The chain crosses the membrane as a helical span at residues 218-238 (WWTAVVIMLIVGIITPVFYLL). The Cytoplasmic segment spans residues 239–306 (YYEILAKVDV…SQSPAAQQET (68 aa)).

Its subcellular location is the cell membrane. It is found in the golgi apparatus. Its function is as follows. Essential for Golgi structural integrity. This Homo sapiens (Human) protein is LysM and putative peptidoglycan-binding domain-containing protein 3 (LYSMD3).